A 248-amino-acid chain; its full sequence is Large ribosomal subunit protein uL10m (248 aa).

The transit peptide at 1-24 (MATLIQRSLSLAKSSTPALQFLRF) directs the protein to the mitochondrion.

This sequence belongs to the universal ribosomal protein uL10 family. Component of the mitochondrial ribosome large subunit (39S) which comprises a 16S rRNA and about 50 distinct proteins.

Its subcellular location is the mitochondrion. This chain is Large ribosomal subunit protein uL10m (mRpL10), found in Drosophila melanogaster (Fruit fly).